A 320-amino-acid chain; its full sequence is MRSAQVYRWQIPMDAGVVLRDRRLKTREGLYVCLREGEREGWGEISPLPGFSQETWEEAQSVLLAWVNNWLAGDCELPQMPSVAFGVSCALAELADTLPQAANYRAAPLCNGDPDDLILKLADMPGEKVAKVKVGLYEAVRDGMVVNLLLEAIPDLHLRLDANRAWTPLKGQQFAKYVNPDYRHRIAFLEEPCKTRDDSRAFARETGIAIAWDESLREPDFAFVAEKGVRAVVIKPTLTGSLDKVREQVQAAHALGLTAVISSSIESSLGLTQLARIAAWLTPDTIPGLDTLDLMQAQQVRRWPGSPLPLVEVDALERLL.

Lys-133 acts as the Proton donor in catalysis. Mg(2+) contacts are provided by Asp-161, Glu-190, and Asp-213. Lys-235 serves as the catalytic Proton acceptor.

The protein belongs to the mandelate racemase/muconate lactonizing enzyme family. MenC type 1 subfamily. It depends on a divalent metal cation as a cofactor.

It catalyses the reaction (1R,6R)-6-hydroxy-2-succinyl-cyclohexa-2,4-diene-1-carboxylate = 2-succinylbenzoate + H2O. It functions in the pathway quinol/quinone metabolism; 1,4-dihydroxy-2-naphthoate biosynthesis; 1,4-dihydroxy-2-naphthoate from chorismate: step 4/7. The protein operates within quinol/quinone metabolism; menaquinone biosynthesis. Its function is as follows. Converts 2-succinyl-6-hydroxy-2,4-cyclohexadiene-1-carboxylate (SHCHC) to 2-succinylbenzoate (OSB). This Escherichia coli (strain SMS-3-5 / SECEC) protein is o-succinylbenzoate synthase.